The chain runs to 207 residues: Ribosomal RNA small subunit methyltransferase G (207 aa).

S-adenosyl-L-methionine-binding positions include Gly71, Phe76, 122-123 (AE), and Arg135.

The protein belongs to the methyltransferase superfamily. RNA methyltransferase RsmG family.

Its subcellular location is the cytoplasm. Its function is as follows. Specifically methylates the N7 position of a guanine in 16S rRNA. The polypeptide is Ribosomal RNA small subunit methyltransferase G (Cytophaga hutchinsonii (strain ATCC 33406 / DSM 1761 / CIP 103989 / NBRC 15051 / NCIMB 9469 / D465)).